Here is a 604-residue protein sequence, read N- to C-terminus: 3-hydroxy-3-methylglutaryl-coenzyme A reductase (604 aa).

The segment at 1 to 31 (MDVRRRSEKPAYPTKEFAAGEKPLKPHKQQQ) is disordered. 2 helical membrane-spanning segments follow: residues 40 to 62 (ASDALPLPLYLTNGLFFTMFFSV) and 90 to 110 (AIASLIASVIYLLGFFGIGFV). Positions 111-189 (QSFVSRDNND…PLVTPAASEE (79 aa)) are linker. Residues 190-604 (DEEIIKSVVQ…STKDVTKASS (415 aa)) form a catalytic region. The active-site Charge relay system is Glu283. N-linked (GlcNAc...) asparagine glycosylation is present at Asn347. Lys415 serves as the catalytic Charge relay system. Asn460 carries N-linked (GlcNAc...) asparagine glycosylation. Asp491 functions as the Charge relay system in the catalytic mechanism. The Proton donor role is filled by His589. Residue Asn593 is glycosylated (N-linked (GlcNAc...) asparagine).

It belongs to the HMG-CoA reductase family. In terms of tissue distribution, found in protoplasts and leaves submitted to stress. Low levels found in apexes, anthers and roots.

It localises to the endoplasmic reticulum membrane. The catalysed reaction is (R)-mevalonate + 2 NADP(+) + CoA = (3S)-3-hydroxy-3-methylglutaryl-CoA + 2 NADPH + 2 H(+). Its pathway is metabolic intermediate biosynthesis; (R)-mevalonate biosynthesis; (R)-mevalonate from acetyl-CoA: step 3/3. Its function is as follows. Catalyzes the synthesis of mevalonate, the specific precursor of all isoprenoid compounds present in plants. Possible role in plant defense mechanisms as well as in the cell cycle. This is 3-hydroxy-3-methylglutaryl-coenzyme A reductase (HMGR) from Nicotiana sylvestris (Wood tobacco).